The primary structure comprises 385 residues: MIYFDNSATTKMAPKALETYSQVVTKIWGNPSSLHKLGDRAHGLLEASRKQVADLLGVNTDEIYFTSGGTESNNTAIKGTAWAKREFGKHIITSSVEHASVANTFTELENLGFRVTRLPVDKEGRVNPEDLKAALDKDTTLVSIMGVNNEIGTIQPIKEISEILADYPNIHFHVDNVQALGKGIWDQVFTSRVDMMSFSSHKFHGPRGIGILYKKRGRMLMPLCEGGGQEKGLRSGTENLAAIAAMAKAARLLLTDEKEKADREYAIKEKISKYLAGKPGIHIFSPLKADFAPHILCFALEGIRGETLVHTLEDQDIYISTTSACASKKADEASTLVAMKTPDAIATSAVRLSFDESNTLEEADEFIAAFDEIYQHFSKINHLGE.

Residues 69 to 70, Asn149, Gln178, and 199 to 201 each bind pyridoxal 5'-phosphate; these read GT and SSH. An N6-(pyridoxal phosphate)lysine modification is found at Lys202. Residue Thr237 participates in pyridoxal 5'-phosphate binding. Residue Cys325 is the Cysteine persulfide intermediate of the active site. Cys325 is a binding site for [2Fe-2S] cluster.

The protein belongs to the class-V pyridoxal-phosphate-dependent aminotransferase family. NifS/IscS subfamily. It depends on pyridoxal 5'-phosphate as a cofactor.

The chain is NifS/IcsS protein homolog from Lactobacillus delbrueckii subsp. bulgaricus (strain ATCC 11842 / DSM 20081 / BCRC 10696 / JCM 1002 / NBRC 13953 / NCIMB 11778 / NCTC 12712 / WDCM 00102 / Lb 14).